The following is a 400-amino-acid chain: MAIHKIRAFFNLEASGGIVLALAAIAAMIIANTSLNTWYESFIHAPVAIQIGSFSIAKDAHHWINDGLMAVFFFLVGLELKREVLIGELSNVKQIILPAGAALGGMVMPAIVYLFFNYNEPEFWRGWAIPTATDIAFALGILSLLGNRVPNSLKVFLVSIAIFDDIGAIIIIALFYTNDLSLGSLAIAGLCLPFLYMLNRRNVTSITPYLLIGVIMWIAVLKSGIHATLAGVVLALFIPLFDRTDPEHSPLEELEHDLQNTVSYGILPLFAFANAGISLKGAGFGELFHSVPLGIAAGLFIGKQVGVMLMCWLIFKLGISTMPKGMNFKQIYGAALLCGVGFTMSLFIGGLAFAGETPLFDERLGIIMGSIVSGIAGYMMLKTTLKDEVNVTSVDLTRHS.

11 helical membrane-spanning segments follow: residues Phe-10–Ile-30, Ala-60–Leu-80, Ile-95–Phe-115, Gly-126–Gly-146, Val-155–Phe-175, Asn-178–Leu-198, Ile-218–Ile-238, Gly-265–Gly-285, Ile-295–Phe-315, Ala-334–Ala-354, and Leu-364–Thr-384.

This sequence belongs to the NhaA Na(+)/H(+) (TC 2.A.33) antiporter family.

Its subcellular location is the cell inner membrane. It carries out the reaction Na(+)(in) + 2 H(+)(out) = Na(+)(out) + 2 H(+)(in). Functionally, na(+)/H(+) antiporter that extrudes sodium in exchange for external protons. The protein is Na(+)/H(+) antiporter NhaA of Psychrobacter arcticus (strain DSM 17307 / VKM B-2377 / 273-4).